The following is a 228-amino-acid chain: Cytidylate kinase (228 aa).

Residue 12-20 (GPASAGKST) participates in ATP binding.

The protein belongs to the cytidylate kinase family. Type 1 subfamily.

Its subcellular location is the cytoplasm. It carries out the reaction CMP + ATP = CDP + ADP. The catalysed reaction is dCMP + ATP = dCDP + ADP. This is Cytidylate kinase from Lactiplantibacillus plantarum (strain ATCC BAA-793 / NCIMB 8826 / WCFS1) (Lactobacillus plantarum).